The primary structure comprises 700 residues: mRNA cap guanine-N(7) methyltransferase (700 aa).

2 stretches are compositionally biased toward basic and acidic residues: residues 1–10 and 52–67; these read MVYDPIRDCD and EPPR…ESHR. Disordered regions lie at residues 1–263 and 277–392; these read MVYD…SVLR and AHAN…ERNK. Residues 113–128 are compositionally biased toward polar residues; it reads RSPSMSLSPRSQNQSL. 2 stretches are compositionally biased toward low complexity: residues 129–144 and 220–241; these read PYPS…SAHP and PQPT…TPHH. In terms of domain architecture, mRNA cap 0 methyltransferase spans 429 to 700; it reads SPIIGLKKFN…LYMGFAFEKM (272 aa). 438–439 is a binding site for mRNA; sequence NN. Positions 442, 461, 483, 512, 538, and 543 each coordinate S-adenosyl-L-methionine.

The protein belongs to the class I-like SAM-binding methyltransferase superfamily. mRNA cap 0 methyltransferase family.

The protein resides in the nucleus. The enzyme catalyses a 5'-end (5'-triphosphoguanosine)-ribonucleoside in mRNA + S-adenosyl-L-methionine = a 5'-end (N(7)-methyl 5'-triphosphoguanosine)-ribonucleoside in mRNA + S-adenosyl-L-homocysteine. Responsible for methylating the 5'-cap structure of mRNAs. This chain is mRNA cap guanine-N(7) methyltransferase (ABD1), found in Cryptococcus neoformans var. neoformans serotype D (strain B-3501A) (Filobasidiella neoformans).